Here is a 23-residue protein sequence, read N- to C-terminus: Putative gene 50 protein (23 aa).

The polypeptide is Putative gene 50 protein (50) (Bacillus subtilis (Bacteriophage SP01)).